The primary structure comprises 102 residues: NADH-quinone oxidoreductase subunit K (102 aa).

Transmembrane regions (helical) follow at residues 5 to 25 (ITHY…GIFL), 31 to 51 (IIIL…FVAF), and 66 to 86 (FILT…VVFF).

The protein belongs to the complex I subunit 4L family. As to quaternary structure, NDH-1 is composed of 14 different subunits. Subunits NuoA, H, J, K, L, M, N constitute the membrane sector of the complex.

The protein localises to the cell inner membrane. The enzyme catalyses a quinone + NADH + 5 H(+)(in) = a quinol + NAD(+) + 4 H(+)(out). Its function is as follows. NDH-1 shuttles electrons from NADH, via FMN and iron-sulfur (Fe-S) centers, to quinones in the respiratory chain. The immediate electron acceptor for the enzyme in this species is believed to be ubiquinone. Couples the redox reaction to proton translocation (for every two electrons transferred, four hydrogen ions are translocated across the cytoplasmic membrane), and thus conserves the redox energy in a proton gradient. The chain is NADH-quinone oxidoreductase subunit K from Bartonella quintana (strain Toulouse) (Rochalimaea quintana).